The primary structure comprises 150 residues: Small ribosomal subunit protein uS11y (150 aa).

Residue S19 is modified to Phosphoserine.

This sequence belongs to the universal ribosomal protein uS11 family.

The protein localises to the cytoplasm. This is Small ribosomal subunit protein uS11y (RPS14B) from Arabidopsis thaliana (Mouse-ear cress).